The sequence spans 228 residues: Cytochrome c oxidase subunit 2 (228 aa).

The Mitochondrial intermembrane portion of the chain corresponds to 1–14; that stretch reads MAYPFQLGFQDATS. Residues 15–45 form a helical membrane-spanning segment; it reads PIMEELLHFHDHTLMIVFLISSLVLYIISLM. At 46–59 the chain is on the mitochondrial matrix side; that stretch reads LTTKLTHTSTMDAQ. A helical transmembrane segment spans residues 60-87; sequence EVETIWTILPAIILILIALPSLRILYMM. The Mitochondrial intermembrane segment spans residues 88–228; the sequence is DEINNPALTV…FEKWSTSMLT (141 aa). 6 residues coordinate Cu cation: His-161, Cys-196, Glu-198, Cys-200, His-204, and Met-207. Glu-198 contacts Mg(2+). Tyr-218 carries the post-translational modification Phosphotyrosine.

The protein belongs to the cytochrome c oxidase subunit 2 family. In terms of assembly, component of the cytochrome c oxidase (complex IV, CIV), a multisubunit enzyme composed of 14 subunits. The complex is composed of a catalytic core of 3 subunits MT-CO1, MT-CO2 and MT-CO3, encoded in the mitochondrial DNA, and 11 supernumerary subunits COX4I, COX5A, COX5B, COX6A, COX6B, COX6C, COX7A, COX7B, COX7C, COX8 and NDUFA4, which are encoded in the nuclear genome. The complex exists as a monomer or a dimer and forms supercomplexes (SCs) in the inner mitochondrial membrane with NADH-ubiquinone oxidoreductase (complex I, CI) and ubiquinol-cytochrome c oxidoreductase (cytochrome b-c1 complex, complex III, CIII), resulting in different assemblies (supercomplex SCI(1)III(2)IV(1) and megacomplex MCI(2)III(2)IV(2)). Found in a complex with TMEM177, COA6, COX18, COX20, SCO1 and SCO2. Interacts with TMEM177 in a COX20-dependent manner. Interacts with COX20. Interacts with COX16. The cofactor is Cu cation.

Its subcellular location is the mitochondrion inner membrane. The catalysed reaction is 4 Fe(II)-[cytochrome c] + O2 + 8 H(+)(in) = 4 Fe(III)-[cytochrome c] + 2 H2O + 4 H(+)(out). Its function is as follows. Component of the cytochrome c oxidase, the last enzyme in the mitochondrial electron transport chain which drives oxidative phosphorylation. The respiratory chain contains 3 multisubunit complexes succinate dehydrogenase (complex II, CII), ubiquinol-cytochrome c oxidoreductase (cytochrome b-c1 complex, complex III, CIII) and cytochrome c oxidase (complex IV, CIV), that cooperate to transfer electrons derived from NADH and succinate to molecular oxygen, creating an electrochemical gradient over the inner membrane that drives transmembrane transport and the ATP synthase. Cytochrome c oxidase is the component of the respiratory chain that catalyzes the reduction of oxygen to water. Electrons originating from reduced cytochrome c in the intermembrane space (IMS) are transferred via the dinuclear copper A center (CU(A)) of subunit 2 and heme A of subunit 1 to the active site in subunit 1, a binuclear center (BNC) formed by heme A3 and copper B (CU(B)). The BNC reduces molecular oxygen to 2 water molecules using 4 electrons from cytochrome c in the IMS and 4 protons from the mitochondrial matrix. The protein is Cytochrome c oxidase subunit 2 (MT-CO2) of Sus scrofa (Pig).